Consider the following 215-residue polypeptide: 3-isopropylmalate dehydratase small subunit (215 aa).

Belongs to the LeuD family. LeuD type 1 subfamily. As to quaternary structure, heterodimer of LeuC and LeuD.

It carries out the reaction (2R,3S)-3-isopropylmalate = (2S)-2-isopropylmalate. It participates in amino-acid biosynthesis; L-leucine biosynthesis; L-leucine from 3-methyl-2-oxobutanoate: step 2/4. Catalyzes the isomerization between 2-isopropylmalate and 3-isopropylmalate, via the formation of 2-isopropylmaleate. The sequence is that of 3-isopropylmalate dehydratase small subunit from Xanthomonas axonopodis pv. citri (strain 306).